The following is a 790-amino-acid chain: N-methylputrescine oxidase 1, peroxisomal (790 aa).

Residues 1–23 are disordered; it reads MATTKQKVTAPSPSPSSSTASCC. The span at 9–23 shows a compositional bias: low complexity; that stretch reads TAPSPSPSSSTASCC. 423-434 is a binding site for substrate; it reads AFDAGEDGLGKN. Aspartate 425 functions as the Proton acceptor in the catalytic mechanism. The cysteines at positions 444 and 470 are disulfide-linked. 506 to 511 serves as a coordination point for substrate; that stretch reads VANYEY. Tyrosine 509 acts as the Schiff-base intermediate with substrate; via topaquinone in catalysis. Tyrosine 509 carries the 2',4',5'-topaquinone modification. The Cu cation site is built by histidine 559 and histidine 561. The Mn(2+) site is built by aspartate 714 and isoleucine 715. Histidine 725 contacts Cu cation.

The protein belongs to the copper/topaquinone oxidase family. As to quaternary structure, homodimer. The cofactor is Cu cation. Requires Zn(2+) as cofactor. It depends on L-topaquinone as a cofactor. Post-translationally, topaquinone (TPQ) is generated by copper-dependent autoxidation of a specific tyrosyl residue. As to expression, mainly expressed in roots, and, to a lower extent, in stems.

It is found in the peroxisome. The catalysed reaction is a primary methyl amine + O2 + H2O = an aldehyde + H2O2 + NH4(+). It carries out the reaction N-methylputrescine + O2 + H2O = 4-methylaminobutanal + H2O2 + NH4(+). The protein operates within alkaloid biosynthesis; nicotine biosynthesis. Functionally, involved in the biosynthesis of pyridine alkaloid natural products, leading mainly to the production of anabasine, anatabine, nicotine and nornicotine, effective deterrents against herbivores with antiparasitic and pesticide properties (neurotoxins); nornicotine serves as the precursor in the synthesis of the carcinogen compound N'-nitrosonornicotine (NNN). Amine oxidase which mediates the deamination of N-methylputrescine to produce 4-methylaminobutanal. Oxidizes preferentially N-methylated amines. This chain is N-methylputrescine oxidase 1, peroxisomal, found in Nicotiana tabacum (Common tobacco).